The chain runs to 156 residues: Small ribosomal subunit protein uS7 (156 aa).

It belongs to the universal ribosomal protein uS7 family. Part of the 30S ribosomal subunit. Contacts proteins S9 and S11.

One of the primary rRNA binding proteins, it binds directly to 16S rRNA where it nucleates assembly of the head domain of the 30S subunit. Is located at the subunit interface close to the decoding center, probably blocks exit of the E-site tRNA. The polypeptide is Small ribosomal subunit protein uS7 (Acinetobacter baumannii (strain AB307-0294)).